A 158-amino-acid polypeptide reads, in one-letter code: 2-C-methyl-D-erythritol 2,4-cyclodiphosphate synthase (158 aa).

A divalent metal cation contacts are provided by D8 and H10. 4-CDP-2-C-methyl-D-erythritol 2-phosphate contacts are provided by residues 8 to 10 and 34 to 35; these read DVH and HS. A divalent metal cation is bound at residue H42. 4-CDP-2-C-methyl-D-erythritol 2-phosphate-binding positions include 56–58, 61–65, 100–106, 132–135, and F139; these read DIG, FPDTD, AQKPKML, and TTEE.

This sequence belongs to the IspF family. As to quaternary structure, homotrimer. A divalent metal cation is required as a cofactor.

The enzyme catalyses 4-CDP-2-C-methyl-D-erythritol 2-phosphate = 2-C-methyl-D-erythritol 2,4-cyclic diphosphate + CMP. It participates in isoprenoid biosynthesis; isopentenyl diphosphate biosynthesis via DXP pathway; isopentenyl diphosphate from 1-deoxy-D-xylulose 5-phosphate: step 4/6. Functionally, involved in the biosynthesis of isopentenyl diphosphate (IPP) and dimethylallyl diphosphate (DMAPP), two major building blocks of isoprenoid compounds. Catalyzes the conversion of 4-diphosphocytidyl-2-C-methyl-D-erythritol 2-phosphate (CDP-ME2P) to 2-C-methyl-D-erythritol 2,4-cyclodiphosphate (ME-CPP) with a corresponding release of cytidine 5-monophosphate (CMP). The polypeptide is 2-C-methyl-D-erythritol 2,4-cyclodiphosphate synthase (Clostridium beijerinckii (strain ATCC 51743 / NCIMB 8052) (Clostridium acetobutylicum)).